Reading from the N-terminus, the 588-residue chain is Aspartate--tRNA ligase (588 aa).

Glutamate 172 serves as a coordination point for L-aspartate. The segment at 196–199 is aspartate; sequence QLFK. L-aspartate is bound at residue arginine 218. Residues 218–220 and glutamine 227 each bind ATP; that span reads RDE. Residue histidine 449 coordinates L-aspartate. Glutamate 483 provides a ligand contact to ATP. Arginine 490 is an L-aspartate binding site. 535-538 is a binding site for ATP; it reads GLDR.

The protein belongs to the class-II aminoacyl-tRNA synthetase family. Type 1 subfamily. As to quaternary structure, homodimer.

The protein localises to the cytoplasm. It carries out the reaction tRNA(Asp) + L-aspartate + ATP = L-aspartyl-tRNA(Asp) + AMP + diphosphate. Its function is as follows. Catalyzes the attachment of L-aspartate to tRNA(Asp) in a two-step reaction: L-aspartate is first activated by ATP to form Asp-AMP and then transferred to the acceptor end of tRNA(Asp). This is Aspartate--tRNA ligase from Haemophilus influenzae (strain 86-028NP).